Reading from the N-terminus, the 274-residue chain is tRNA-cytidine(32) 2-sulfurtransferase (274 aa).

The PP-loop motif motif lies at 40–45 (SGGKDS). Residues Cys115, Cys118, and Cys206 each coordinate [4Fe-4S] cluster.

Belongs to the TtcA family. In terms of assembly, homodimer. Mg(2+) is required as a cofactor. [4Fe-4S] cluster serves as cofactor.

Its subcellular location is the cytoplasm. It catalyses the reaction cytidine(32) in tRNA + S-sulfanyl-L-cysteinyl-[cysteine desulfurase] + AH2 + ATP = 2-thiocytidine(32) in tRNA + L-cysteinyl-[cysteine desulfurase] + A + AMP + diphosphate + H(+). It functions in the pathway tRNA modification. In terms of biological role, catalyzes the ATP-dependent 2-thiolation of cytidine in position 32 of tRNA, to form 2-thiocytidine (s(2)C32). The sulfur atoms are provided by the cysteine/cysteine desulfurase (IscS) system. The polypeptide is tRNA-cytidine(32) 2-sulfurtransferase (Pseudomonas paraeruginosa (strain DSM 24068 / PA7) (Pseudomonas aeruginosa (strain PA7))).